The primary structure comprises 310 residues: MTKKKIGLLVMAYGTPRTKEEIEPYYTHIRHGRKPSQELLDDLTERYEAIGGVSPLAKITDDQAIALEQKLNELYDDIEFKSYLGLKHIDPFIEDAVEQMKEDGVQEAVSIVLAPHFSTFSVKSYNGRAHEESKKIGGPRIQSVESWYDEPLFIQYWVDQVNDTMAKIEDKDKACVIFSAHSLPEKIVDYGDPYPQQLKETADLIAKGAGITNYAVGWQSEGNTPEPWLGPDVQDLTRDLYETHGYTSMIYCPVGFVADHLEVLYDNDYECKVVTDELGIDYYRPEMPNAKPEFIDCLATVIQKKLAEKE.

Residues Y13, R30, 46 to 47, S54, and Y125 each bind Fe-coproporphyrin III; that span reads RY. Fe(2+)-binding residues include H181 and E262.

Belongs to the ferrochelatase family.

Its subcellular location is the cytoplasm. The enzyme catalyses Fe-coproporphyrin III + 2 H(+) = coproporphyrin III + Fe(2+). Its pathway is porphyrin-containing compound metabolism; protoheme biosynthesis. Functionally, involved in coproporphyrin-dependent heme b biosynthesis. Catalyzes the insertion of ferrous iron into coproporphyrin III to form Fe-coproporphyrin III. In Halalkalibacterium halodurans (strain ATCC BAA-125 / DSM 18197 / FERM 7344 / JCM 9153 / C-125) (Bacillus halodurans), this protein is Coproporphyrin III ferrochelatase.